Reading from the N-terminus, the 178-residue chain is Translation initiation factor IF-3 (178 aa).

Belongs to the IF-3 family. In terms of assembly, monomer.

The protein localises to the cytoplasm. In terms of biological role, IF-3 binds to the 30S ribosomal subunit and shifts the equilibrium between 70S ribosomes and their 50S and 30S subunits in favor of the free subunits, thus enhancing the availability of 30S subunits on which protein synthesis initiation begins. This Nautilia profundicola (strain ATCC BAA-1463 / DSM 18972 / AmH) protein is Translation initiation factor IF-3.